We begin with the raw amino-acid sequence, 155 residues long: Transcriptional repressor NrdR (155 aa).

A zinc finger lies at 3-34; sequence CPFCGHSSTQVLDSRVSEDGDTVRRRRRCEAC. Residues 49-139 form the ATP-cone domain; the sequence is PAIVKKNGSR…VYRSFEDVSE (91 aa).

Belongs to the NrdR family. Zn(2+) is required as a cofactor.

Functionally, negatively regulates transcription of bacterial ribonucleotide reductase nrd genes and operons by binding to NrdR-boxes. This chain is Transcriptional repressor NrdR, found in Cupriavidus metallidurans (strain ATCC 43123 / DSM 2839 / NBRC 102507 / CH34) (Ralstonia metallidurans).